Here is a 482-residue protein sequence, read N- to C-terminus: Glutamyl-tRNA(Gln) amidotransferase subunit A (482 aa).

Catalysis depends on charge relay system residues K81 and S156. S180 (acyl-ester intermediate) is an active-site residue.

It belongs to the amidase family. GatA subfamily. As to quaternary structure, heterotrimer of A, B and C subunits.

It catalyses the reaction L-glutamyl-tRNA(Gln) + L-glutamine + ATP + H2O = L-glutaminyl-tRNA(Gln) + L-glutamate + ADP + phosphate + H(+). Functionally, allows the formation of correctly charged Gln-tRNA(Gln) through the transamidation of misacylated Glu-tRNA(Gln) in organisms which lack glutaminyl-tRNA synthetase. The reaction takes place in the presence of glutamine and ATP through an activated gamma-phospho-Glu-tRNA(Gln). The protein is Glutamyl-tRNA(Gln) amidotransferase subunit A of Brachyspira hyodysenteriae (strain ATCC 49526 / WA1).